Consider the following 1616-residue polypeptide: Protein Shroom2 (1616 aa).

The 83-residue stretch at 26–108 (LVEVQLSGGA…TLKLVVKRRS (83 aa)) folds into the PDZ domain. Disordered stretches follow at residues 128–159 (ELAA…LSSS) and 183–229 (HPSS…KADT). The span at 150–159 (SSSSHDLSSS) shows a compositional bias: low complexity. 2 stretches are compositionally biased toward polar residues: residues 186 to 197 (SRLSVAKSNSSI) and 220 to 229 (PDHTLSKADT). The residue at position 231 (serine 231) is a Phosphoserine. Positions 247–259 (QGGRQAQAAGDPQ) are enriched in low complexity. Disordered stretches follow at residues 247-475 (QGGR…SGWQ), 502-678 (GALE…PLAG), 695-790 (TSFK…SEDT), 802-869 (EETS…LPRR), 881-1100 (KEQR…PSPA), 1115-1184 (PSVF…LTDK), 1268-1302 (AEPE…PGLS), and 1363-1389 (QRRK…VPAA). Over residues 312–321 (SSPPPPPPPL) the composition is skewed to pro residues. A phosphoserine mark is found at serine 313 and serine 325. Residues 343–356 (AAAAQHFTALAQAQ) are compositionally biased toward low complexity. The span at 358–370 (RGDRRPELTDRPW) shows a compositional bias: basic and acidic residues. The span at 405 to 415 (SSRLQASLSSS) shows a compositional bias: low complexity. At serine 413 the chain carries Phosphoserine. The ASD1 domain occupies 684–773 (LKEAQARVLR…SEPEKMNEVG (90 aa)). 2 stretches are compositionally biased toward basic and acidic residues: residues 754–770 (FTAE…EKMN) and 821–830 (IPRDKPERPR). The span at 842–854 (WSRTTSLGDSLNA) shows a compositional bias: polar residues. 5 positions are modified to phosphoserine: serine 851, serine 897, serine 921, serine 922, and serine 924. The residue at position 925 (threonine 925) is a Phosphothreonine. The span at 926–958 (DHYKQEASVELRRQAGDPGEPREELPSAVRAEE) shows a compositional bias: basic and acidic residues. Position 974 is a phosphoserine (serine 974). The span at 975–994 (PGSQQHPPSQKAPNPPTFSE) shows a compositional bias: polar residues. Serine 1036 and serine 1039 each carry phosphoserine. A compositionally biased stretch (basic and acidic residues) spans 1068–1077 (PKREPRRYRA). Residues 1159 to 1176 (LRLQTATMETSRSPSPQF) show a composition bias toward polar residues. Serine 1171, serine 1173, and serine 1297 each carry phosphoserine. The ASD2 domain maps to 1317–1611 (EELAREIVGK…QLKCLLDSLQ (295 aa)).

This sequence belongs to the shroom family. As to quaternary structure, interacts with F-actin. In terms of tissue distribution, abundant in retina and melanoma; also in brain, placenta, lung, kidney and pancreas.

It localises to the apical cell membrane. The protein localises to the cell junction. Its subcellular location is the tight junction. It is found in the cytoplasm. The protein resides in the cytoskeleton. Functionally, may be involved in endothelial cell morphology changes during cell spreading. In the retinal pigment epithelium, may regulate the biogenesis of melanosomes and promote their association with the apical cell surface by inducing gamma-tubulin redistribution. This Homo sapiens (Human) protein is Protein Shroom2 (SHROOM2).